The primary structure comprises 357 residues: MAVEQEHFVHLARPLAPTSMGFTGSAPLTVHIQPQAVFSVIDHAVRRDTRDTQSTRVIGALVGTRSEDGSEVEVRSTFAIPHTENEDQVEVDVEYQKNMLALTLKASPRETLLGWYTTSHELNSFSALIQNFFASPETGTFPHPAVHLTISTEPGAPIATKAYISAPVAVSPERAAESCLFIEVPHKLLFSDAERAALGTATAAAETEARSAPVISDIETLAQSLESVSDLLERVSGFVGEVLDEERDGSHALGQYLMNALSLAPKVSATQIEADFNNHVQDVLMVSYLANTIRTQIDLAQRLATAPLVGGDKEGGEKGKDGEDGGRGGRGGKRGGGGRGGHRGEPREPREPREPAE.

Residues 30-169 enclose the MPN domain; sequence VHIQPQAVFS…TKAYISAPVA (140 aa). Positions 309–357 are disordered; sequence VGGDKEGGEKGKDGEDGGRGGRGGKRGGGGRGGHRGEPREPREPREPAE. Composition is skewed to basic and acidic residues over residues 311–327 and 342–357; these read GDKE…DGGR and HRGE…EPAE.

This sequence belongs to the eIF-3 subunit F family. Component of the eukaryotic translation initiation factor 3 (eIF-3) complex.

The protein resides in the cytoplasm. In terms of biological role, component of the eukaryotic translation initiation factor 3 (eIF-3) complex, which is involved in protein synthesis of a specialized repertoire of mRNAs and, together with other initiation factors, stimulates binding of mRNA and methionyl-tRNAi to the 40S ribosome. The eIF-3 complex specifically targets and initiates translation of a subset of mRNAs involved in cell proliferation. This chain is Eukaryotic translation initiation factor 3 subunit F, found in Chaetomium globosum (strain ATCC 6205 / CBS 148.51 / DSM 1962 / NBRC 6347 / NRRL 1970) (Soil fungus).